The chain runs to 151 residues: Superoxide dismutase [Cu-Zn] (151 aa).

A lipid anchor (S-palmitoyl cysteine) is attached at cysteine 6. Cu cation contacts are provided by histidine 45, histidine 47, and histidine 62. The cysteines at positions 56 and 144 are disulfide-linked. Zn(2+) is bound by residues histidine 62, histidine 70, histidine 79, and aspartate 82. Histidine 118 provides a ligand contact to Cu cation.

This sequence belongs to the Cu-Zn superoxide dismutase family. Homodimer. Cu cation serves as cofactor. Requires Zn(2+) as cofactor.

The protein resides in the cytoplasm. The protein localises to the nucleus. It carries out the reaction 2 superoxide + 2 H(+) = H2O2 + O2. Destroys radicals which are normally produced within the cells and which are toxic to biological systems. In Xenopus tropicalis (Western clawed frog), this protein is Superoxide dismutase [Cu-Zn] (sod1).